The chain runs to 478 residues: Transposase for insertion sequence element IS231B (478 aa).

The protein belongs to the transposase 11 family.

Involved in the transposition of the insertion sequence. The protein is Transposase for insertion sequence element IS231B of Bacillus thuringiensis subsp. berliner.